Reading from the N-terminus, the 113-residue chain is MEARAIARYIRVSPFKARQVADLVRGKDTEEAMAILRYTNKKSAPLIRKVLQSAIANAEHNFDMDSNALVVSQIFIDEGPIVKRMRPRAYGRADVRRHRTSHITVVLREREVK.

This sequence belongs to the universal ribosomal protein uL22 family. Part of the 50S ribosomal subunit.

In terms of biological role, this protein binds specifically to 23S rRNA; its binding is stimulated by other ribosomal proteins, e.g. L4, L17, and L20. It is important during the early stages of 50S assembly. It makes multiple contacts with different domains of the 23S rRNA in the assembled 50S subunit and ribosome. Its function is as follows. The globular domain of the protein is located near the polypeptide exit tunnel on the outside of the subunit, while an extended beta-hairpin is found that lines the wall of the exit tunnel in the center of the 70S ribosome. In Syntrophomonas wolfei subsp. wolfei (strain DSM 2245B / Goettingen), this protein is Large ribosomal subunit protein uL22.